We begin with the raw amino-acid sequence, 229 residues long: GTP cyclohydrolase 1 (229 aa).

A disordered region spans residues 1–26; sequence MDAKIKPLRGGKPADARPEFQPAELD. 3 residues coordinate Zn(2+): cysteine 118, histidine 121, and cysteine 189.

Belongs to the GTP cyclohydrolase I family. As to quaternary structure, toroid-shaped homodecamer, composed of two pentamers of five dimers.

It catalyses the reaction GTP + H2O = 7,8-dihydroneopterin 3'-triphosphate + formate + H(+). The protein operates within cofactor biosynthesis; 7,8-dihydroneopterin triphosphate biosynthesis; 7,8-dihydroneopterin triphosphate from GTP: step 1/1. The polypeptide is GTP cyclohydrolase 1 (Rhodopseudomonas palustris (strain BisB5)).